The following is a 420-amino-acid chain: Type II methyltransferase M.HgiCI (420 aa).

One can recognise an SAM-dependent MTase C5-type domain in the interval 2 to 417; sequence LKFIDLFAGI…LDLFKSADLA (416 aa). Cysteine 75 is an active-site residue.

This sequence belongs to the class I-like SAM-binding methyltransferase superfamily. C5-methyltransferase family.

The catalysed reaction is a 2'-deoxycytidine in DNA + S-adenosyl-L-methionine = a 5-methyl-2'-deoxycytidine in DNA + S-adenosyl-L-homocysteine + H(+). Functionally, a methylase that recognizes the double-stranded sequence 5'-GGYRCC-3', methylates C-5 on both strands, and protects the DNA from cleavage by the HgiCI endonuclease. This is Type II methyltransferase M.HgiCI (hgiCIM) from Herpetosiphon aurantiacus (Herpetosiphon giganteus).